Here is a 467-residue protein sequence, read N- to C-terminus: Ribulose bisphosphate carboxylase large chain (467 aa).

Lys5 carries the N6,N6,N6-trimethyllysine modification. Residues Asn114 and Thr164 each contribute to the substrate site. The active-site Proton acceptor is the Lys166. Lys168 is a binding site for substrate. Lys192, Asp194, and Glu195 together coordinate Mg(2+). Lys192 bears the N6-carboxylysine mark. Catalysis depends on His285, which acts as the Proton acceptor. 3 residues coordinate substrate: Arg286, His318, and Ser370.

Belongs to the RuBisCO large chain family. Type I subfamily. Heterohexadecamer of 8 large chains and 8 small chains; disulfide-linked. The disulfide link is formed within the large subunit homodimers. Requires Mg(2+) as cofactor. In terms of processing, the disulfide bond which can form in the large chain dimeric partners within the hexadecamer appears to be associated with oxidative stress and protein turnover.

It localises to the plastid. The protein resides in the chloroplast. The enzyme catalyses 2 (2R)-3-phosphoglycerate + 2 H(+) = D-ribulose 1,5-bisphosphate + CO2 + H2O. It catalyses the reaction D-ribulose 1,5-bisphosphate + O2 = 2-phosphoglycolate + (2R)-3-phosphoglycerate + 2 H(+). Functionally, ruBisCO catalyzes two reactions: the carboxylation of D-ribulose 1,5-bisphosphate, the primary event in carbon dioxide fixation, as well as the oxidative fragmentation of the pentose substrate in the photorespiration process. Both reactions occur simultaneously and in competition at the same active site. The sequence is that of Ribulose bisphosphate carboxylase large chain from Jasminum simplicifolium subsp. suavissimum (Native jasmine).